The sequence spans 254 residues: Mediator of RNA polymerase II transcription subunit 4 (254 aa).

Residues 72-114 adopt a coiled-coil conformation; sequence RVHQEMQSLEKEVEKRDSDIQQLQKQLKEAEHILATAVYQAKE. Residues 215-254 form a disordered region; that stretch reads ILPPHHGNDFGLEPPGHNKENEDDVEAMSTDSSSSSSDSD. The segment covering 243–254 has biased composition (low complexity); sequence STDSSSSSSDSD.

Belongs to the Mediator complex subunit 4 family. In terms of assembly, component of the Mediator complex.

The protein localises to the nucleus. Its function is as follows. Component of the Mediator complex, a coactivator involved in the regulated transcription of nearly all RNA polymerase II-dependent genes. Mediator functions as a bridge to convey information from gene-specific regulatory proteins to the basal RNA polymerase II transcription machinery. Mediator is recruited to promoters by direct interactions with regulatory proteins and serves as a scaffold for the assembly of a functional preinitiation complex with RNA polymerase II and the general transcription factors. The protein is Mediator of RNA polymerase II transcription subunit 4 (med4) of Danio rerio (Zebrafish).